Reading from the N-terminus, the 74-residue chain is MDLSKRSAENVEYMIEQLKQKLKVMNFDALKPSHFSEEWYDELKDIYEMVMKRETFSPSEMQAIVEELGNLRKK.

It belongs to the UPF0435 family.

The sequence is that of UPF0435 protein GTNG_0390 from Geobacillus thermodenitrificans (strain NG80-2).